A 334-amino-acid chain; its full sequence is Nucleoid-associated protein Pfl01_0983 (334 aa).

Belongs to the YejK family.

It localises to the cytoplasm. Its subcellular location is the nucleoid. In Pseudomonas fluorescens (strain Pf0-1), this protein is Nucleoid-associated protein Pfl01_0983.